Reading from the N-terminus, the 306-residue chain is MDTLDRVVKPKTKRAKRFLEKREPKLNENIKNAMLIKGGNANATVTKVLKDVYALKKPYGVLYKKKNITRPFEDQTSLEFFSKKSDCSLFMFGSHNKKRPNNLVIGRMYDYHVLDMIELGIENFVSLKDIKNSKCPEGTKPMLIFAGDDFDVTEDYRRLKSLLIDFFRGPTVSNIRLAGLEYVLHFTALNGKIYFRSYKLLLKKSGCRTPRIELEEMGPSLDLVLRRTHLASDDLYKLSMKMPKALKPKKKKNISHDTFGTTYGRIHMQKQDLSKLQTRKMKGLKKRPAERITEDHEKKSKRIKKN.

Residues 31-234 enclose the Brix domain; the sequence is KNAMLIKGGN…LRRTHLASDD (204 aa). The interval 270 to 306 is disordered; sequence KQDLSKLQTRKMKGLKKRPAERITEDHEKKSKRIKKN. A compositionally biased stretch (basic residues) spans 277 to 286; sequence QTRKMKGLKK. The segment covering 287–298 has biased composition (basic and acidic residues); sequence RPAERITEDHEK.

It belongs to the RPF2 family. In terms of assembly, component of a hexameric 5S RNP precursor complex, composed of 5S RNA, RRS1, RPF2/BXDC1, RPL5, RPL11 and HEATR3; this complex acts as a precursor for ribosome assembly.

It localises to the nucleus. The protein localises to the nucleolus. In terms of biological role, involved in ribosomal large subunit assembly. May regulate the localization of the 5S RNP/5S ribonucleoprotein particle to the nucleolus. The chain is Ribosome production factor 2 homolog (RPF2) from Homo sapiens (Human).